Here is an 895-residue protein sequence, read N- to C-terminus: Zyg eleven-related protein 1 (895 aa).

Disordered regions lie at residues 58-78 (HGPAPVEHLGPPTDEPRPDQG) and 195-221 (RGQMERDGLRSPLSPSSQPSSIQSDHQ). Low complexity predominate over residues 205–220 (SPLSPSSQPSSIQSDH).

Interacts with elc-1. Part of an E3 ubiquitin ligase complex including zer-11, cul-2 and elc-1.

In terms of biological role, acts as a target recruitment subunit in the E3 ubiquitin ligase complex zer-1-cul-2-elc-1. This Caenorhabditis elegans protein is Zyg eleven-related protein 1 (zer-1).